Here is a 102-residue protein sequence, read N- to C-terminus: Large ribosomal subunit protein bL21 (102 aa).

The protein belongs to the bacterial ribosomal protein bL21 family. Part of the 50S ribosomal subunit. Contacts protein L20.

Its function is as follows. This protein binds to 23S rRNA in the presence of protein L20. In Nocardioides sp. (strain ATCC BAA-499 / JS614), this protein is Large ribosomal subunit protein bL21.